The sequence spans 166 residues: Small ribosomal subunit protein uS5 (166 aa).

The region spanning 11 to 74 is the S5 DRBM domain; it reads LQEKLIAVNR…EKARRNMMNV (64 aa).

Belongs to the universal ribosomal protein uS5 family. Part of the 30S ribosomal subunit. Contacts proteins S4 and S8.

Functionally, with S4 and S12 plays an important role in translational accuracy. In terms of biological role, located at the back of the 30S subunit body where it stabilizes the conformation of the head with respect to the body. This Pectobacterium atrosepticum (strain SCRI 1043 / ATCC BAA-672) (Erwinia carotovora subsp. atroseptica) protein is Small ribosomal subunit protein uS5.